The primary structure comprises 477 residues: Glutamyl-tRNA(Gln) amidotransferase subunit A (477 aa).

Catalysis depends on charge relay system residues lysine 76 and serine 151. The Acyl-ester intermediate role is filled by serine 175.

The protein belongs to the amidase family. GatA subfamily. Heterotrimer of A, B and C subunits.

It carries out the reaction L-glutamyl-tRNA(Gln) + L-glutamine + ATP + H2O = L-glutaminyl-tRNA(Gln) + L-glutamate + ADP + phosphate + H(+). In terms of biological role, allows the formation of correctly charged Gln-tRNA(Gln) through the transamidation of misacylated Glu-tRNA(Gln) in organisms which lack glutaminyl-tRNA synthetase. The reaction takes place in the presence of glutamine and ATP through an activated gamma-phospho-Glu-tRNA(Gln). This chain is Glutamyl-tRNA(Gln) amidotransferase subunit A, found in Chlorobium phaeobacteroides (strain BS1).